A 300-amino-acid chain; its full sequence is MASQQFPPQNQETQPGKEHAMDPRPEAIIQSYKPANKLKDKVAIVTGGDSGIGRAVCLCFALEGATVAFTYVKGQEEKDAEETLRALRDIRARTGAKDPMAIPADLGYDDNCRKVVDEVAGAYGGAIDILVNNAAEQYERPSITDITEDDLERVFRTNIFSYFFMSKHAVKRMRDRRGGAGAGGCSIINTSSINAYKGNKTLLDYTATKGAIVAFTRALALQLAEEGIRVNGVAPGPIWTPLIPASFAEEKVRQFGSQVPMGRAGQPSEVAPSFVFLASDDASYMSGQMLHVNGGVIVNG.

Over residues 1–14 (MASQQFPPQNQETQ) the composition is skewed to polar residues. A disordered region spans residues 1 to 23 (MASQQFPPQNQETQPGKEHAMDP). 44–68 (IVTGGDSGIGRAVCLCFALEGATVA) is an NAD(+) binding site. Ser192 lines the substrate pocket. The active-site Proton acceptor is the Tyr205.

The protein belongs to the short-chain dehydrogenases/reductases (SDR) family.

May act as a short alcohol-polyol-sugar dehydrogenase possibly related to carbohydrate metabolism and the acquisition of desiccation tolerance. May also be involved in signal transduction. The protein is Glucose and ribitol dehydrogenase homolog of Oryza sativa subsp. japonica (Rice).